A 318-amino-acid polypeptide reads, in one-letter code: Sol locus transcriptional repressor (318 aa).

TPR repeat units follow at residues 65–98 (ANAY…RPKT), 99–132 (INDV…QPNV), 133–166 (GISY…GSTN), and 167–199 (SVYR…EPEK).

Transcriptional repressor of the sol locus (adhE/aad, ctfA, ctfB and adc) genes for butanol and acetone formation. This chain is Sol locus transcriptional repressor (solR), found in Clostridium acetobutylicum (strain ATCC 824 / DSM 792 / JCM 1419 / IAM 19013 / LMG 5710 / NBRC 13948 / NRRL B-527 / VKM B-1787 / 2291 / W).